A 294-amino-acid chain; its full sequence is Nucleotide-binding protein LCA_0526 (294 aa).

ATP is bound at residue 12–19; it reads GMSGAGKT. 62-65 is a binding site for GTP; the sequence is DLRS.

This sequence belongs to the RapZ-like family.

Displays ATPase and GTPase activities. The chain is Nucleotide-binding protein LCA_0526 from Latilactobacillus sakei subsp. sakei (strain 23K) (Lactobacillus sakei subsp. sakei).